The sequence spans 273 residues: Large ribosomal subunit protein uL2 (273 aa).

A disordered region spans residues 221–263 (RGTAMNPVDHPHGGGEGRNFGKHPVTPWGVQTKGKKTRHNKRT). Residues 253–263 (KGKKTRHNKRT) show a composition bias toward basic residues.

Belongs to the universal ribosomal protein uL2 family. In terms of assembly, part of the 50S ribosomal subunit. Forms a bridge to the 30S subunit in the 70S ribosome.

Its function is as follows. One of the primary rRNA binding proteins. Required for association of the 30S and 50S subunits to form the 70S ribosome, for tRNA binding and peptide bond formation. It has been suggested to have peptidyltransferase activity; this is somewhat controversial. Makes several contacts with the 16S rRNA in the 70S ribosome. This Actinobacillus succinogenes (strain ATCC 55618 / DSM 22257 / CCUG 43843 / 130Z) protein is Large ribosomal subunit protein uL2.